A 182-amino-acid chain; its full sequence is MILSDQNFLQTQWKEPQTAQSKNTESKCEFHGNSNEVKPIGSLNGQSIAQCRIHTGKTVPIVKGGEQARMEENEIYAIETFGSTGKGYFHDDMETSHYMKNFELADEKIPLRLQKSKGLLKLIDKNFATLAFCRCWIDRLEETKYLMALKDRWMAMVGACILQSFAGKIIGKRANLLLNLII.

Residues 1–23 show a composition bias toward polar residues; the sequence is MILSDQNFLQTQWKEPQTAQSKN. Residues 1 to 33 form a disordered region; that stretch reads MILSDQNFLQTQWKEPQTAQSKNTESKCEFHGN.

It belongs to the peptidase M24 family.

This is an uncharacterized protein from Caenorhabditis elegans.